An 822-amino-acid chain; its full sequence is Molybdenum cofactor sulfurase (822 aa).

Residue Lys-239 is modified to N6-(pyridoxal phosphate)lysine. Cys-401 is an active-site residue. The tract at residues 633–666 is disordered; the sequence is TRISNPTRSSRRSQRALMPGSFPEDPSPTSEQPP. Residues 643–820 form the MOSC domain; it reads RRSQRALMPG…VMVGDVVTPQ (178 aa).

Belongs to the class-V pyridoxal-phosphate-dependent aminotransferase family. MOCOS subfamily. Requires pyridoxal 5'-phosphate as cofactor.

It carries out the reaction Mo-molybdopterin + L-cysteine + AH2 = thio-Mo-molybdopterin + L-alanine + A + H2O. The protein operates within cofactor biosynthesis; molybdopterin biosynthesis. Its function is as follows. Sulfurates the molybdenum cofactor. Sulfation of molybdenum is essential for xanthine dehydrogenase (XDH) and aldehyde oxidase (ADO) enzymes in which molybdenum cofactor is liganded by 1 oxygen and 1 sulfur atom in active form. This Aspergillus oryzae (strain ATCC 42149 / RIB 40) (Yellow koji mold) protein is Molybdenum cofactor sulfurase.